The sequence spans 595 residues: Peptidyl-prolyl cis-trans isomerase CYP65 (595 aa).

The region spanning 35–108 is the U-box domain; the sequence is KSLPYYCCAL…GEYHCPVLNK (74 aa). In terms of domain architecture, PPIase cyclophilin-type spans 342-496; it reads KKGYVQFQTT…EEIKIIEASV (155 aa). Disordered stretches follow at residues 503 to 546 and 576 to 595; these read ELDE…GGGG and SKKRKTTASASTGFKDFSSW. Residues 510–525 are compositionally biased toward basic and acidic residues; it reads KEKAEKEKNEDKDIEK. The span at 582–595 shows a compositional bias: polar residues; that stretch reads TASASTGFKDFSSW.

It belongs to the cyclophilin-type PPIase family. PPIL2 subfamily. Expressed in leaves, flower buds and stems. Lower levels of expression in roots.

It localises to the nucleus. The enzyme catalyses [protein]-peptidylproline (omega=180) = [protein]-peptidylproline (omega=0). It carries out the reaction S-ubiquitinyl-[E2 ubiquitin-conjugating enzyme]-L-cysteine + [acceptor protein]-L-lysine = [E2 ubiquitin-conjugating enzyme]-L-cysteine + N(6)-ubiquitinyl-[acceptor protein]-L-lysine.. It functions in the pathway protein modification; protein ubiquitination. In terms of biological role, may catalyze the cis-trans isomerization of proline imidic peptide bonds in oligopeptides thereby assisting the folding of proteins. May also function as a chaperone, playing a role in intracellular transport of proteins. May also have a protein ubiquitin ligase activity acting as an E3 ubiquitin protein ligase or as a ubiquitin-ubiquitin ligase promoting elongation of ubiquitin chains on proteins. This chain is Peptidyl-prolyl cis-trans isomerase CYP65 (CYP65), found in Arabidopsis thaliana (Mouse-ear cress).